A 526-amino-acid polypeptide reads, in one-letter code: Outer capsid protein VP5 (526 aa).

Residues 1-42 (MGKIIKSLSRFGKKVGNALTSNTAKKIYSTIGKAAERFAESE) are involved in membrane permeabilization.

This sequence belongs to the orbivirus VP5 family.

The protein resides in the virion. Functionally, VP5 protein is one of the two proteins (with VP2) which constitute the virus particle outer capsid. Acts as a membrane permeabilization protein that mediates release of viral particles from endosomal compartments into the cytoplasm. Permeabilization activity is probably negatively regulated by VP2 and is triggered by endosomal degradation of VP2 and exposure to low pH. The protein is Outer capsid protein VP5 (Segment-6) of Bluetongue virus 11 (isolate USA) (BTV 11).